A 406-amino-acid chain; its full sequence is MNSKKIGAMIAAAVLSLIVMTPAATRKIVQRQTRNSSTAVENSAADESETENVPVSQTHTNDTMTVTSAKDLVAKMTNGWNLGNTMDATAQGLGSEVSWLPLKVTTNKYMIDMLPEAGFNVLRIPVSWGNHIIDDKYTSDPAWMDRVQEIVNYGIDNGLYVILNTHHEEWYMPKPSEKDGDIEEIKAVWAQIADRFKGYDEHLIFEGLNEPRLRGEGAEWTGTSEAREIINEYEKAFVETVRASGGNNGDRCLMITGYAASSAYNNLSAIELPEDSDKLIISVHAYLPYSFALDTKGTDKYDPEDTAIPELFEHLNELFISKGIPVIVGEFGTMNKENTEDRVKCLEDYLAAAAKYDIPCVWWDNYARIGNGENFGLMNRADLEWYFPDLIETFKTYAEKDPASAE.

A signal peptide spans 1-43; that stretch reads MNSKKIGAMIAAAVLSLIVMTPAATRKIVQRQTRNSSTAVENS. Composition is skewed to polar residues over residues 30–41 and 51–62; these read QRQTRNSSTAVE and ENVPVSQTHTND. The tract at residues 30–62 is disordered; that stretch reads QRQTRNSSTAVENSAADESETENVPVSQTHTND. Glu210 acts as the Proton donor in catalysis. Glu330 functions as the Nucleophile in the catalytic mechanism.

The protein belongs to the glycosyl hydrolase 5 (cellulase A) family.

The catalysed reaction is Endohydrolysis of (1-&gt;4)-beta-D-glucosidic linkages in cellulose, lichenin and cereal beta-D-glucans.. The chain is Endoglucanase 1 (Eg I) from Ruminococcus albus.